The primary structure comprises 271 residues: Phosphatidylglycerol--prolipoprotein diacylglyceryl transferase (271 aa).

7 consecutive transmembrane segments (helical) span residues Leu21–Ala41, Leu60–Tyr80, Val95–Trp115, Phe124–Ile144, Gln177–Gly197, Gly203–Val223, and Phe236–Val256. Arg143 serves as a coordination point for a 1,2-diacyl-sn-glycero-3-phospho-(1'-sn-glycerol).

This sequence belongs to the Lgt family.

The protein resides in the cell inner membrane. It carries out the reaction L-cysteinyl-[prolipoprotein] + a 1,2-diacyl-sn-glycero-3-phospho-(1'-sn-glycerol) = an S-1,2-diacyl-sn-glyceryl-L-cysteinyl-[prolipoprotein] + sn-glycerol 1-phosphate + H(+). The protein operates within protein modification; lipoprotein biosynthesis (diacylglyceryl transfer). In terms of biological role, catalyzes the transfer of the diacylglyceryl group from phosphatidylglycerol to the sulfhydryl group of the N-terminal cysteine of a prolipoprotein, the first step in the formation of mature lipoproteins. In Vibrio cholerae serotype O1 (strain ATCC 39541 / Classical Ogawa 395 / O395), this protein is Phosphatidylglycerol--prolipoprotein diacylglyceryl transferase.